The following is a 258-amino-acid chain: Phosphate import ATP-binding protein PstB (258 aa).

One can recognise an ABC transporter domain in the interval 5 to 247 (IDISGLSAFY…ERIFSNPSVQ (243 aa)). 37 to 44 (GPSGCGKS) provides a ligand contact to ATP.

It belongs to the ABC transporter superfamily. Phosphate importer (TC 3.A.1.7) family. The complex is composed of two ATP-binding proteins (PstB), two transmembrane proteins (PstC and PstA) and a solute-binding protein (PstS).

The protein resides in the cell membrane. It carries out the reaction phosphate(out) + ATP + H2O = ADP + 2 phosphate(in) + H(+). Functionally, part of the ABC transporter complex PstSACB involved in phosphate import. Responsible for energy coupling to the transport system. The protein is Phosphate import ATP-binding protein PstB of Streptomyces griseus.